We begin with the raw amino-acid sequence, 409 residues long: Serine/threonine transporter SstT (409 aa).

The next 9 helical transmembrane spans lie at 24 to 44, 48 to 68, 82 to 102, 142 to 162, 194 to 214, 218 to 238, 292 to 312, 319 to 339, and 365 to 385; these read LALGIVIGSVSPQLGLAAGLF, FVGALKAVAPVLVFILVAATI, IIVLYLIGTFSAALTAVIAGM, AIANANYIGILAWALVLGAAL, LGIFGLVSSTIAETGFGALAG, LLAVLLGCMAFIALAVNPAIV, IPLGATVNMGGAAITITVLAM, GIQVDFATALLLSLVATVSAC, and VAMQVVAVGFIIGVIQDSAET.

It belongs to the dicarboxylate/amino acid:cation symporter (DAACS) (TC 2.A.23) family.

It localises to the cell inner membrane. It catalyses the reaction L-serine(in) + Na(+)(in) = L-serine(out) + Na(+)(out). The catalysed reaction is L-threonine(in) + Na(+)(in) = L-threonine(out) + Na(+)(out). In terms of biological role, involved in the import of serine and threonine into the cell, with the concomitant import of sodium (symport system). This chain is Serine/threonine transporter SstT, found in Neisseria gonorrhoeae (strain NCCP11945).